Here is a 157-residue protein sequence, read N- to C-terminus: Spore germination protein GerT (157 aa).

It is found in the spore coat. Involved in spore germination; probably required at the earliest stage of germination. In Bacillus subtilis (strain 168), this protein is Spore germination protein GerT (gerT).